The chain runs to 898 residues: MLRTIVTKIFGSRNDRILRRLNKQVRIINKLEAEFELLTDEELKSKTTEFRTRLKNGEKLENLIPEAFATVREASKRILGMRPFDVQLIGGMVLNNRCIAEMRTGEGKTLTATLPCYLNALTGKGVHVVTVNDYLARRDAETNRPLFEFLGMTVGINVPGLSPEEKRAAYAADITYATNSELGFDYLRDNLAHSAQDRFQKHLHYALVDEVDSILIDEARTPLIISGPAEDSSELYMAMDKLIPILIQQDKEDTEEYQGDGDFTLDLKNKQAHLTERGQEKIEQWLMEKGFINENESLYSPARISLLHHIYAALRAHKLFERDVDYIVKNGEIVIVDEHTGRTMAGRRWSDGLHQAIEAKEGVQIQGENQTVASITYQNYFRLYEKLAGMTGTADTEAFEFQQIYGLETIVIPTNKPMIRDDRTDIMFENEKYKFDAIIEDIKDCVARNQPVLVGTISIEKSELLSNALNKAGIKHNVLNAKFHAQEAEIIANAGYPSAVTIATNMAGRGTDIVLGGNWKAEVAKLDDPTEEQIEEIKAAWQIRHDTVKQAGGLHIIGTERHESRRIDNQLRGRSGRQGDPGSSRFYLSLDDALMRIYLTEGKLNFMRKMFTEKGEGMESKMLAKVIAQAQAKVEAHNFDGRKNLLEFDDVANDQRHAIYEQRNALLDNEDIADTIQVIRQDVFNHVIDEYVPPHSLEEQWDIPALETRLKQDFALDLPLSKWLEEDNTFNEDVLRERVLTVAISEYKRKEELVGQETMRNFEKGVMLQTLDELWKEHLSAMDHLRRGIHLRGYAQKDPKQEYKKESFQMFTDMLDTLKLSVITTLSRVQIRTQDEVEKAEQARQKIAERENAAMQYQNNEGTSSLHEKSEHKIGRNESCPCGSGKKYKHCHGSKAKY.

Residues glutamine 87, 105 to 109 (GEGKT), and aspartate 512 contribute to the ATP site. Polar residues predominate over residues 855 to 865 (MQYQNNEGTSS). The tract at residues 855–898 (MQYQNNEGTSSLHEKSEHKIGRNESCPCGSGKKYKHCHGSKAKY) is disordered. The span at 866–876 (LHEKSEHKIGR) shows a compositional bias: basic and acidic residues. Residues cysteine 880, cysteine 882, cysteine 891, and histidine 892 each contribute to the Zn(2+) site. Residues 886-898 (KKYKHCHGSKAKY) are compositionally biased toward basic residues.

Belongs to the SecA family. Monomer and homodimer. Part of the essential Sec protein translocation apparatus which comprises SecA, SecYEG and auxiliary proteins SecDF-YajC and YidC. Zn(2+) serves as cofactor.

Its subcellular location is the cell inner membrane. The protein localises to the cytoplasm. The enzyme catalyses ATP + H2O + cellular proteinSide 1 = ADP + phosphate + cellular proteinSide 2.. Part of the Sec protein translocase complex. Interacts with the SecYEG preprotein conducting channel. Has a central role in coupling the hydrolysis of ATP to the transfer of proteins into and across the cell membrane, serving both as a receptor for the preprotein-SecB complex and as an ATP-driven molecular motor driving the stepwise translocation of polypeptide chains across the membrane. The protein is Protein translocase subunit SecA of Histophilus somni (strain 129Pt) (Haemophilus somnus).